Here is a 173-residue protein sequence, read N- to C-terminus: Globin-like host-protective antigen (173 aa).

The N-terminal stretch at 1–15 is a signal peptide; sequence MRFLLLAAFVAYAYA. The 142-residue stretch at 25–166 folds into the Globin domain; the sequence is ALSALDVVPL…FNDEAQKQLA (142 aa). Position 114 (histidine 114) interacts with heme b.

The protein belongs to the globin family.

The protein localises to the secreted. The protein resides in the extracellular space. Functionally, may be a globin and may play a role in oxygen transport. This chain is Globin-like host-protective antigen, found in Trichostrongylus colubriformis (Black scour worm).